We begin with the raw amino-acid sequence, 467 residues long: ADAM DEC1 (467 aa).

Positions 1-33 (MLPGTSRLPTEASMSWVLLSVLWLIIQIQVIDA) are cleaved as a signal peptide. The propeptide occupies 34 to 208 (TLTPELKPHE…LRTSRSLKNP (175 aa)). N-linked (GlcNAc...) asparagine glycans are attached at residues asparagine 61 and asparagine 236. Residues 217–411 (KYIGLFLVLD…RNARCLLLAP (195 aa)) form the Peptidase M12B domain. Cystine bridges form between cysteine 327-cysteine 406 and cysteine 368-cysteine 373. Histidine 351 lines the Zn(2+) pocket. The active site involves glutamate 352. Zn(2+) is bound by residues histidine 355 and aspartate 361. The region spanning 418–467 (KPTCGNQVLDVGEECDCGSPEECTNLCCEPLTCRLKSQPDCSEASNHITE) is the Disintegrin domain.

It depends on Zn(2+) as a cofactor. As to expression, expressed highly in uterus during pregnancy.

The protein localises to the secreted. Its function is as follows. May play an important role in the control of the immune response and during pregnancy. The protein is ADAM DEC1 (Adamdec1) of Mus musculus (Mouse).